A 159-amino-acid polypeptide reads, in one-letter code: Ribosomal RNA large subunit methyltransferase H (159 aa).

Residues Leu-76, Gly-108, and 127-132 (FSKMTF) each bind S-adenosyl-L-methionine.

The protein belongs to the RNA methyltransferase RlmH family. Homodimer.

It localises to the cytoplasm. It catalyses the reaction pseudouridine(1915) in 23S rRNA + S-adenosyl-L-methionine = N(3)-methylpseudouridine(1915) in 23S rRNA + S-adenosyl-L-homocysteine + H(+). Its function is as follows. Specifically methylates the pseudouridine at position 1915 (m3Psi1915) in 23S rRNA. The protein is Ribosomal RNA large subunit methyltransferase H of Clostridium botulinum (strain Eklund 17B / Type B).